Here is a 412-residue protein sequence, read N- to C-terminus: Pyruvate dehydrogenase E1 component subunit alpha, mitochondrial (412 aa).

Residues His104, Tyr130, Arg131, Ala169, Gly177, Val179, Asp208, Gly209, Ala210, Asn237, and Tyr239 each coordinate pyruvate. The thiamine diphosphate site is built by Tyr130 and Arg131. 6 residues coordinate thiamine diphosphate: Gly177, Val179, Asp208, Gly209, Ala210, and Asn237. Asp208 contacts Mg(2+). Mg(2+) is bound by residues Asn237 and Tyr239. His304 serves as a coordination point for thiamine diphosphate.

Tetramer of 2 alpha and 2 beta subunits. Thiamine diphosphate serves as cofactor. Requires Mg(2+) as cofactor.

It localises to the mitochondrion matrix. The catalysed reaction is N(6)-[(R)-lipoyl]-L-lysyl-[protein] + pyruvate + H(+) = N(6)-[(R)-S(8)-acetyldihydrolipoyl]-L-lysyl-[protein] + CO2. Its activity is regulated as follows. E1 activity is regulated by phosphorylation (inactivation) and dephosphorylation (activation) of the alpha subunit. In terms of biological role, the pyruvate dehydrogenase complex catalyzes the overall conversion of pyruvate to acetyl-CoA and CO(2). It contains multiple copies of three enzymatic components: pyruvate dehydrogenase (E1), dihydrolipoamide acetyltransferase (E2) and lipoamide dehydrogenase (E3). This is Pyruvate dehydrogenase E1 component subunit alpha, mitochondrial (PDA1) from Kluyveromyces lactis (strain ATCC 8585 / CBS 2359 / DSM 70799 / NBRC 1267 / NRRL Y-1140 / WM37) (Yeast).